The sequence spans 61 residues: Large ribosomal subunit protein uL30 (61 aa).

This sequence belongs to the universal ribosomal protein uL30 family. Part of the 50S ribosomal subunit.

The protein is Large ribosomal subunit protein uL30 of Mycolicibacterium gilvum (strain PYR-GCK) (Mycobacterium gilvum (strain PYR-GCK)).